Here is a 420-residue protein sequence, read N- to C-terminus: MNLLVVGSGGREHAISKKLLASNNVEKVFCAPGNDGMRLDDIQLVAISETDKAGLIDFAKKAEIAFVIVGPEVPLLEGVVDALEEAGIKAFGPKANAALIEGSKDFAKQFMEKYAIPTAASRTFTDYAEAKAYLNERGVPIVIKADGLAAGKGVTVALEMEEAVLALKDMMLEEKFGDASLKVVIEDFLAGEEFSLMAFVNGEEVYPMSIAQDHKRAYEGDKGPNTGGMGAYSPVPHISEAVIEEAVQKILLPTAKGMVKEGRYFRGILYAGLILTADGPKVIEFNARFGDPETQVVLPRLESDFAALIDALLHNEKPDVRFKKTGLTLGVVLASAGYPEHYEKGNKLTGLNDIAEDVAIYHAGTKQDENGDFISDGGRVLLLAKEAETMSDARTLLYPEMQKLDNPNFFYRIDIGTKAE.

The 207-residue stretch at 108–314 (KQFMEKYAIP…FAALIDALLH (207 aa)) folds into the ATP-grasp domain. 134 to 195 (LNERGVPIVI…EDFLAGEEFS (62 aa)) is an ATP binding site. Residues Glu-284 and Asn-286 each contribute to the Mg(2+) site.

The protein belongs to the GARS family. Requires Mg(2+) as cofactor. It depends on Mn(2+) as a cofactor.

It carries out the reaction 5-phospho-beta-D-ribosylamine + glycine + ATP = N(1)-(5-phospho-beta-D-ribosyl)glycinamide + ADP + phosphate + H(+). It participates in purine metabolism; IMP biosynthesis via de novo pathway; N(1)-(5-phospho-D-ribosyl)glycinamide from 5-phospho-alpha-D-ribose 1-diphosphate: step 2/2. The protein is Phosphoribosylamine--glycine ligase of Listeria monocytogenes serovar 1/2a (strain ATCC BAA-679 / EGD-e).